The primary structure comprises 165 residues: Endoribonuclease YbeY (165 aa).

Residues H130, H134, and H140 each contribute to the Zn(2+) site.

This sequence belongs to the endoribonuclease YbeY family. Zn(2+) serves as cofactor.

The protein resides in the cytoplasm. In terms of biological role, single strand-specific metallo-endoribonuclease involved in late-stage 70S ribosome quality control and in maturation of the 3' terminus of the 16S rRNA. The sequence is that of Endoribonuclease YbeY from Streptococcus suis (strain 98HAH33).